Consider the following 145-residue polypeptide: Large ribosomal subunit protein uL11 (145 aa).

Belongs to the universal ribosomal protein uL11 family. In terms of assembly, part of the ribosomal stalk of the 50S ribosomal subunit. Interacts with L10 and the large rRNA to form the base of the stalk. L10 forms an elongated spine to which L12 dimers bind in a sequential fashion forming a multimeric L10(L12)X complex. Post-translationally, one or more lysine residues are methylated.

Forms part of the ribosomal stalk which helps the ribosome interact with GTP-bound translation factors. This is Large ribosomal subunit protein uL11 from Coxiella burnetii (strain CbuK_Q154) (Coxiella burnetii (strain Q154)).